Reading from the N-terminus, the 194-residue chain is Protein GrpE (194 aa).

This sequence belongs to the GrpE family. As to quaternary structure, homodimer.

It is found in the cytoplasm. In terms of biological role, participates actively in the response to hyperosmotic and heat shock by preventing the aggregation of stress-denatured proteins, in association with DnaK and GrpE. It is the nucleotide exchange factor for DnaK and may function as a thermosensor. Unfolded proteins bind initially to DnaJ; upon interaction with the DnaJ-bound protein, DnaK hydrolyzes its bound ATP, resulting in the formation of a stable complex. GrpE releases ADP from DnaK; ATP binding to DnaK triggers the release of the substrate protein, thus completing the reaction cycle. Several rounds of ATP-dependent interactions between DnaJ, DnaK and GrpE are required for fully efficient folding. This is Protein GrpE from Aliivibrio fischeri (strain MJ11) (Vibrio fischeri).